The following is a 443-amino-acid chain: Methionine aminopeptidase 2-1 (443 aa).

Positions 1-90 (MAAQADDELN…RVPVSELFPN (90 aa)) are disordered. The segment covering 33–48 (ADNDDSEDDEKEEEGG) has biased composition (acidic residues). The segment covering 58–73 (KKKKKRKPKKKKKGGA) has biased composition (basic residues). Substrate is bound at residue H196. D216, D227, and H296 together coordinate a divalent metal cation. H304 contributes to the substrate binding site. E329 and E424 together coordinate a divalent metal cation.

It belongs to the peptidase M24A family. Methionine aminopeptidase eukaryotic type 2 subfamily. Co(2+) serves as cofactor. Zn(2+) is required as a cofactor. It depends on Mn(2+) as a cofactor. The cofactor is Fe(2+).

It is found in the cytoplasm. The enzyme catalyses Release of N-terminal amino acids, preferentially methionine, from peptides and arylamides.. In terms of biological role, cotranslationally removes the N-terminal methionine from nascent proteins. The N-terminal methionine is often cleaved when the second residue in the primary sequence is small and uncharged (Met-Ala-, Cys, Gly, Pro, Ser, Thr, or Val). The polypeptide is Methionine aminopeptidase 2-1 (Talaromyces stipitatus (strain ATCC 10500 / CBS 375.48 / QM 6759 / NRRL 1006) (Penicillium stipitatum)).